A 356-amino-acid polypeptide reads, in one-letter code: Tyrosine recombinase XerS (356 aa).

In terms of domain architecture, Core-binding (CB) spans 16–121 (VMPPYVLEYY…ALSSLYKYLT (106 aa)). The 186-residue stretch at 169-354 (GFLDYIDSEY…INEEQKNALD (186 aa)) folds into the Tyr recombinase domain. Catalysis depends on residues Arg210, Lys234, His306, Arg309, and His332. The O-(3'-phospho-DNA)-tyrosine intermediate role is filled by Tyr341.

This sequence belongs to the 'phage' integrase family. XerS subfamily.

The protein resides in the cytoplasm. FtsK is required for recombination. Its function is as follows. Site-specific tyrosine recombinase, which acts by catalyzing the cutting and rejoining of the recombining DNA molecules. Essential to convert dimers of the bacterial chromosome into monomers to permit their segregation at cell division. In Lactococcus lactis subsp. cremoris (strain SK11), this protein is Tyrosine recombinase XerS.